The following is a 366-amino-acid chain: Proline-rich protein 19 (366 aa).

Disordered stretches follow at residues M1–C53, E102–V149, T256–G286, and A301–N338. The segment covering G18 to R29 has biased composition (basic residues). 2 stretches are compositionally biased toward polar residues: residues H104 to S113 and T256 to Q265. Over residues S275–G286 the composition is skewed to low complexity. The segment covering T302–L326 has biased composition (pro residues).

In terms of assembly, interacts with CNTD1. As to expression, preferentially expressed in gonads.

The protein resides in the nucleus. It is found in the chromosome. In terms of biological role, promotes meiotic crossing over formation through its interaction with CNTD1 by participating in the crossover differentiation step of crossover-specific recombination intermediates. The polypeptide is Proline-rich protein 19 (Mus musculus (Mouse)).